A 383-amino-acid polypeptide reads, in one-letter code: Probable cytosolic iron-sulfur protein assembly protein 1 (383 aa).

WD repeat units lie at residues 10–49 (AHND…KFPL), 56–108 (THKR…VEYD), 135–175 (GHEN…EEFE), 182–221 (DHSQ…DEWS), 228–275 (GHEG…EDDE), 302–341 (VHKY…KWVI), and 349–383 (HGVH…LWKI).

It belongs to the WD repeat CIA1 family. Interacts with NAR1.

The protein localises to the cytoplasm. It localises to the nucleus. In terms of biological role, essential component of the cytosolic iron-sulfur (Fe/S) protein assembly machinery. Required for the maturation of extramitochondrial Fe/S proteins. The polypeptide is Probable cytosolic iron-sulfur protein assembly protein 1 (Candida albicans (strain SC5314 / ATCC MYA-2876) (Yeast)).